A 45-amino-acid chain; its full sequence is MTQRTLGGTNRKQKRTSGFRARMRKSNGRKVIQARRKKGRHRLSV.

Residues M1 to N10 are compositionally biased toward polar residues. The disordered stretch occupies residues M1 to V45. The span at R11 to V45 shows a compositional bias: basic residues.

Belongs to the bacterial ribosomal protein bL34 family.

The protein is Large ribosomal subunit protein bL34 of Crocosphaera subtropica (strain ATCC 51142 / BH68) (Cyanothece sp. (strain ATCC 51142)).